The sequence spans 438 residues: Battenin (438 aa).

Positions 1-29 (MGGCAGSRRRLLDSEEEETAPEPRPPRSY) are disordered. At 1–37 (MGGCAGSRRRLLDSEEEETAPEPRPPRSYHKGALWKN) the chain is on the cytoplasmic side. A Phosphoserine modification is found at S14. A helical membrane pass occupies residues 38–58 (VMGFWLLGLCNNFSYVVMLSA). Residues 59-127 (AHDILSHQRA…GLHLLPYSPR (69 aa)) are Lumenal-facing. The disordered stretch occupies residues 68–89 (ASGNQSHVDPDPPPTAHNSSSR). Residues N71 and N85 are each glycosylated (N-linked (GlcNAc...) asparagine). The helical transmembrane segment at 128–148 (VLVSGICAAGSFILVAFSHSV) threads the bilayer. The Cytoplasmic portion of the chain corresponds to 149–151 (GTS). Residues 152 to 172 (LCGVVLASISSGVGEVTFLSL) form a helical membrane-spanning segment. The Lumenal portion of the chain corresponds to 173 to 182 (TAFYPRAVIS). Residues 183–203 (WWSSGTGGAGLMGALSYLGLT) traverse the membrane as a helical segment. Residues 204–277 (QAGLSPQHTL…NLSLQERWTV (74 aa)) lie on the Cytoplasmic side of the membrane. The segment at 236–267 (PQDPGGEEEAETSARQPLIDSETPESKPDSSS) is disordered. Residues 242 to 244 (EEE) carry the Lysosomal targeting motif motif. Positions 253–254 (LI) match the Lysosomal targeting motif. Required for AP1G1, AP2A2 and AP3D1 interaction motif. A helical membrane pass occupies residues 278–298 (FKGLLWYIVPLVLVYFAEYFI). Topologically, residues 299–346 (NQGLFELLFFRNTSLNHAQQYRWYQMLYQAGVFVSRSSLHCCRIRFTW) are lumenal. N-linked (GlcNAc...) asparagine glycosylation occurs at N310. Residues 347 to 367 (VLALLQCLNLAFLLVDVWFSF) form a helical membrane-spanning segment. At 368 to 438 (LPSIYLVFLI…PLHDFLCHLS (71 aa)) the chain is on the cytoplasmic side. The Lysosomal targeting motif signature appears at 409–419 (MAAACISDTLG). Residue C435 is modified to Cysteine methyl ester. C435 carries the S-farnesyl cysteine lipid modification. Positions 436 to 438 (HLS) are cleaved as a propeptide — removed in mature form.

Belongs to the battenin family. As to quaternary structure, interacts with DCTN1, KIF3A, RAB7A and RILP. Interacts with CLN5. Highly glycosylated. In terms of processing, farnesylation is important for trafficking to lysosomes.

The protein localises to the lysosome membrane. Its subcellular location is the late endosome. The protein resides in the lysosome. Its function is as follows. Mediates microtubule-dependent, anterograde transport connecting the Golgi network, endosomes, autophagosomes, lysosomes and plasma membrane, and participates in several cellular processes such as regulation of lysosomal pH, lysosome protein degradation, receptor-mediated endocytosis, autophagy, transport of proteins and lipids from the TGN, apoptosis and synaptic transmission. Facilitates the proteins transport from trans-Golgi network (TGN)-to other membrane compartments such as transport of microdomain-associated proteins to the plasma membrane, IGF2R transport to the lysosome where it regulates the CTSD release leading to regulation of CTSD maturation and thereby APP intracellular processing. Moreover regulates CTSD activity in response to osmotic stress. Also binds galactosylceramide and transports it from the trans Golgi to the rafts, which may have immediate and downstream effects on cell survival by modulating ceramide synthesis. At the plasma membrane, regulates actin-dependent events including filopodia formation, cell migration, and pinocytosis through ARF1-CDC42 pathway and also the cytoskeleton organization through interaction with MYH10 and fodrin leading to the regulation of the plasma membrane association of Na+, K+ ATPase complex. Regulates synaptic transmission in the amygdala, hippocampus, and cerebellum through regulation of synaptic vesicles density and their proximity to active zones leading to modulation of short-term plasticity and age-dependent anxious behavior, learning and memory. Regulates autophagic vacuoles (AVs) maturation by modulating the trafficking between endocytic and autophagolysosomal/lysosomal compartments, which involves vesicle fusion leading to regulation of degradation process. Also participates in cellular homeostasis of compounds such as, water, ions, amino acids, proteins and lipids in several tissue namely in brain and kidney through regulation of their transport and synthesis. This Canis lupus familiaris (Dog) protein is Battenin.